The sequence spans 200 residues: Pyridoxal 5'-phosphate synthase subunit PdxT (200 aa).

L-glutamine is bound at residue 46-48 (GES). The active-site Nucleophile is cysteine 78. L-glutamine-binding positions include arginine 107 and 138–139 (IR). Catalysis depends on charge relay system residues histidine 175 and glutamate 177.

Belongs to the glutaminase PdxT/SNO family. In terms of assembly, in the presence of PdxS, forms a dodecamer of heterodimers. Only shows activity in the heterodimer.

The catalysed reaction is aldehydo-D-ribose 5-phosphate + D-glyceraldehyde 3-phosphate + L-glutamine = pyridoxal 5'-phosphate + L-glutamate + phosphate + 3 H2O + H(+). It catalyses the reaction L-glutamine + H2O = L-glutamate + NH4(+). Its pathway is cofactor biosynthesis; pyridoxal 5'-phosphate biosynthesis. Its function is as follows. Catalyzes the hydrolysis of glutamine to glutamate and ammonia as part of the biosynthesis of pyridoxal 5'-phosphate. The resulting ammonia molecule is channeled to the active site of PdxS. The sequence is that of Pyridoxal 5'-phosphate synthase subunit PdxT from Corynebacterium glutamicum (strain ATCC 13032 / DSM 20300 / JCM 1318 / BCRC 11384 / CCUG 27702 / LMG 3730 / NBRC 12168 / NCIMB 10025 / NRRL B-2784 / 534).